The chain runs to 62 residues: Large ribosomal subunit protein bL28 (62 aa).

The tract at residues 1–23 (MGKQCYVTGRKASTGNRRSHALN) is disordered.

The protein belongs to the bacterial ribosomal protein bL28 family.

The polypeptide is Large ribosomal subunit protein bL28 (Staphylococcus carnosus (strain TM300)).